We begin with the raw amino-acid sequence, 456 residues long: Senecionine N-oxygenase (456 aa).

Residues 1-22 (MFRKFVIMLVLSLLVAAGISQA) form the signal peptide. 32–37 (GAGYSG) is an FAD binding site. 215–220 (GAGPSG) contributes to the NADP(+) binding site.

This sequence belongs to the FMO family. Homotetramer. FAD is required as a cofactor. As to expression, hemolymph.

It is found in the secreted. The catalysed reaction is senecionine + NADPH + O2 = senecionine N-oxide + NADP(+) + H2O. In terms of biological role, NADPH-dependent monooxygenase that detoxifies senecionine and similar plant alkaloids that are ingested by the larvae. Is active towards a narrow range of related substrates with highest activity towards senecionine, followed by seneciphylline, retrorsine, monocrotaline, senecivernine, axillarine and axillaridine. This is Senecionine N-oxygenase (sno1) from Tyria jacobaeae (Cinnabar moth).